We begin with the raw amino-acid sequence, 1031 residues long: Beta-galactosidase (1031 aa).

Residues N100 and D198 each coordinate substrate. D198 is a binding site for Na(+). Mg(2+) contacts are provided by E412, H414, and E457. Substrate-binding positions include E457 and 533–536; that span reads EYAH. The active-site Proton donor is the E457. E533 serves as the catalytic Nucleophile. N593 contributes to the Mg(2+) binding site. 2 residues coordinate Na(+): F597 and N600. Positions 600 and 1005 each coordinate substrate.

Belongs to the glycosyl hydrolase 2 family. As to quaternary structure, homotetramer. Requires Mg(2+) as cofactor. The cofactor is Na(+).

It catalyses the reaction Hydrolysis of terminal non-reducing beta-D-galactose residues in beta-D-galactosides.. This chain is Beta-galactosidase, found in Vibrio vulnificus (strain YJ016).